A 447-amino-acid chain; its full sequence is GTPase Der (447 aa).

2 consecutive EngA-type G domains span residues 3-167 (PVIA…QLPE) and 180-353 (IRLA…KAAT). Residues 9-16 (GRPNVGKS), 56-60 (DTGGF), 119-122 (NKAE), 186-193 (GRPNVGKS), 233-237 (DTAGL), and 298-301 (NKWD) contribute to the GTP site. Residues 353 to 438 (TCKMPTPVLT…PLRIEMKTSR (86 aa)) form the KH-like domain.

It belongs to the TRAFAC class TrmE-Era-EngA-EngB-Septin-like GTPase superfamily. EngA (Der) GTPase family. Associates with the 50S ribosomal subunit.

Its function is as follows. GTPase that plays an essential role in the late steps of ribosome biogenesis. The protein is GTPase Der of Paracidovorax citrulli (strain AAC00-1) (Acidovorax citrulli).